Consider the following 237-residue polypeptide: MEKGKFIYEGKAKQLYETDDKDLVIVHYKDDATAGNGAKKGTIHNKGIMNNEITALIFNMLEEHGIKTHFVKKLNDRDQLCQRVKIFPLEVIVRNIIAGSMAKRVGIKEGTKISNTIFEICYKNDEYGDPLINDHHAVAMGLATYDELKEIYDITGKINNLLKEKFDNIGITLVDFKIEFGKNSKGEILLADEITPDTCRLWDKKTGEKLDKDRFRRDLGNIEEAYIEVVKRLTEKK.

The protein belongs to the SAICAR synthetase family.

The enzyme catalyses 5-amino-1-(5-phospho-D-ribosyl)imidazole-4-carboxylate + L-aspartate + ATP = (2S)-2-[5-amino-1-(5-phospho-beta-D-ribosyl)imidazole-4-carboxamido]succinate + ADP + phosphate + 2 H(+). The protein operates within purine metabolism; IMP biosynthesis via de novo pathway; 5-amino-1-(5-phospho-D-ribosyl)imidazole-4-carboxamide from 5-amino-1-(5-phospho-D-ribosyl)imidazole-4-carboxylate: step 1/2. The protein is Phosphoribosylaminoimidazole-succinocarboxamide synthase of Fusobacterium nucleatum subsp. nucleatum (strain ATCC 25586 / DSM 15643 / BCRC 10681 / CIP 101130 / JCM 8532 / KCTC 2640 / LMG 13131 / VPI 4355).